We begin with the raw amino-acid sequence, 513 residues long: Light-independent protochlorophyllide reductase subunit B (513 aa).

Aspartate 36 provides a ligand contact to [4Fe-4S] cluster. Aspartate 299 acts as the Proton donor in catalysis. 434 to 435 (GM) contacts substrate.

This sequence belongs to the ChlB/BchB/BchZ family. Protochlorophyllide reductase is composed of three subunits; ChlL, ChlN and ChlB. Forms a heterotetramer of two ChlB and two ChlN subunits. Requires [4Fe-4S] cluster as cofactor.

It is found in the plastid. It localises to the chloroplast. It carries out the reaction chlorophyllide a + oxidized 2[4Fe-4S]-[ferredoxin] + 2 ADP + 2 phosphate = protochlorophyllide a + reduced 2[4Fe-4S]-[ferredoxin] + 2 ATP + 2 H2O. Its pathway is porphyrin-containing compound metabolism; chlorophyll biosynthesis (light-independent). Its function is as follows. Component of the dark-operative protochlorophyllide reductase (DPOR) that uses Mg-ATP and reduced ferredoxin to reduce ring D of protochlorophyllide (Pchlide) to form chlorophyllide a (Chlide). This reaction is light-independent. The NB-protein (ChlN-ChlB) is the catalytic component of the complex. The chain is Light-independent protochlorophyllide reductase subunit B from Staurastrum punctulatum (Green alga).